The following is a 515-amino-acid chain: Pre-glycoprotein polyprotein GP complex (515 aa).

Gly2 carries the N-myristoyl glycine; by host lipid modification. The Extracellular portion of the chain corresponds to Gly2–Glu17. Residues Ala18–Lys33 form a helical membrane-spanning segment. Topologically, residues Gly34–Ser58 are cytoplasmic. Cys57 is a Zn(2+) binding site. Over His59–Asp453 the chain is Extracellular. Disulfide bonds link Cys87–Cys255, Cys300–Cys313, Cys322–Cys331, and Cys385–Cys406. 5 N-linked (GlcNAc...) asparagine; by host glycosylation sites follow: Asn90, Asn112, Asn127, Asn180, and Asn248. 3 N-linked (GlcNAc...) asparagine; by host glycosylation sites follow: Asn386, Asn394, and Asn416. A helical transmembrane segment spans residues Leu454–Pro474. Topologically, residues Thr475 to Arg515 are cytoplasmic. His476, His478, Cys484, His488, Cys496, and Cys498 together coordinate Zn(2+).

It belongs to the arenaviridae GPC protein family. Interacts with glycoprotein G2. Part of the GP complex (GP-C) together with glycoprotein G1 and glycoprotein G2. The GP-complex interacts with protein Z, which interacts with ribonucleocapsid; these interactions may induce virion budding. As to quaternary structure, homotrimer; disulfide-linked. In pre-fusion state, G1 homotrimers bind G2 homotrimers via ionic interactions. Part of the GP complex (GP-C) together with glycoprotein G2 and the stable signal peptide. The GP-complex interacts with protein Z, which interacts with ribonucleocapsid; these interactions may induce virion budding. In terms of assembly, homotrimer. Interacts with the stable signal peptide. In pre-fusion state, G2 homotrimers bind G1 homotrimers via ionic interactions. Part of the GP complex (GP-C) together with glycoprotein G1 and the stable signal peptide. Acidification in the endosome triggers rearrangements, which ultimately leads to a 6 helix bundle formed by the two heptad repeat domains (HR1 and HR2) in post-fusion state. The GP-complex interacts with protein Z, which interacts with ribonucleocapsid; these interactions may induce virion budding. Specific enzymatic cleavages in vivo yield mature proteins. GP-C polyprotein is cleaved in the endoplasmic reticulum by the host protease MBTPS1. Only cleaved glycoprotein is incorporated into virions. Post-translationally, the SSP remains stably associated with the GP complex following cleavage by signal peptidase and plays crucial roles in the trafficking of GP through the secretory pathway. In terms of processing, myristoylation is necessary for GP2-mediated fusion activity.

The protein localises to the virion membrane. The protein resides in the host endoplasmic reticulum membrane. It localises to the host Golgi apparatus membrane. It is found in the host cell membrane. Functions as a cleaved signal peptide that is retained as the third component of the GP complex (GP-C). Helps to stabilize the spike complex in its native conformation. The SSP is required for efficient glycoprotein expression, post-translational maturation cleavage of G1 and G2, glycoprotein transport to the cell surface plasma membrane, formation of infectious virus particles, and acid pH-dependent glycoprotein-mediated cell fusion. Its function is as follows. Forms the virion spikes together with glycoprotein G2. The glycoprotein spike trimers are connected to the underlying matrix. Mediates virus attachment to host receptor alpha-dystroglycan DAG1. This attachment induces virion internalization predominantly through clathrin- and caveolin-independent endocytosis. Functionally, forms the virion spikes together with glycoprotein G1. The glycoprotein spike trimers are connected to the underlying matrix. Class I viral fusion protein that directs fusion of viral and host endosomal membranes, leading to delivery of the nucleocapsid into the cytoplasm. Membrane fusion is mediated by irreversible conformational changes induced by acidification. In Latino mammarenavirus (isolate Rat/Bolivia/MARU 1924/1965) (LATV), this protein is Pre-glycoprotein polyprotein GP complex.